Reading from the N-terminus, the 605-residue chain is Methyl-CpG-binding domain protein 1 (605 aa).

Positions 1-69 constitute an MBD domain; it reads MAEDWLDCPA…TLFDFKQGIL (69 aa). Residues 80–123 are disordered; the sequence is AVASKKRKKPSRPAKTRKRQVGPQSGEVRKEAPRDETKADTDTA. Positions 83 to 99 are enriched in basic residues; it reads SKKRKKPSRPAKTRKRQ. Positions 84 to 88 match the Nuclear localization signal motif; the sequence is KKRKK. Over residues 106-120 the composition is skewed to basic and acidic residues; sequence EVRKEAPRDETKADT. Lys-117 is covalently cross-linked (Glycyl lysine isopeptide (Lys-Gly) (interchain with G-Cter in SUMO2)). 2 CXXC-type zinc fingers span residues 169–216 and 217–263; these read RMFK…RRCL and RIVE…RRCL. Zn(2+) contacts are provided by Cys-176, Cys-179, Cys-182, Cys-188, Cys-191, Cys-194, Cys-210, Cys-215, Cys-225, Cys-228, Cys-231, Cys-237, Cys-240, Cys-243, Cys-257, and Cys-262. The interval 269-308 is disordered; that stretch reads RRKGGCDSKMAARRRPGAQPLPPPPPSQSPEPTEPHPRAL. Residue Lys-277 forms a Glycyl lysine isopeptide (Lys-Gly) (interchain with G-Cter in SUMO2) linkage. Residues 287-297 are compositionally biased toward pro residues; sequence QPLPPPPPSQS. Ser-297 is subject to Phosphoserine. The segment at 330–378 adopts a CXXC-type 3 zinc-finger fold; sequence TNRRQNRKCGACAACLRRMDCGRCDFCCDKPKFGGSNQKRQKCRWRQCL. 8 residues coordinate Zn(2+): Cys-338, Cys-341, Cys-344, Cys-350, Cys-353, Cys-356, Cys-372, and Cys-377. Phosphoserine occurs at positions 391 and 399. The segment at 391–451 is disordered; it reads SESEDGAGSP…EAGGGFVLPP (61 aa). Basic residues predominate over residues 403–417; sequence YRRRKRPSSARRHHL. Residue Lys-422 forms a Glycyl lysine isopeptide (Lys-Gly) (interchain with G-Cter in SUMO2) linkage. The span at 426-439 shows a compositional bias: polar residues; sequence ATRTAQPDHTQAPT. A Glycyl lysine isopeptide (Lys-Gly) (interchain with G-Cter in SUMO2) cross-link involves residue Lys-440. Residues Lys-499 and Lys-538 each participate in a glycyl lysine isopeptide (Lys-Gly) (interchain with G-Cter in SUMO2); alternate cross-link. The tract at residues 520–573 is disordered; sequence VLVPGCPSKAVDPGLPSVKQEPPDPEEDKEENKDDSASKLAPEEEAGGAGTPVI. The interval 529 to 592 is transcriptional repression domain (TRD); sequence AVDPGLPSVK…RFRDTAVWLP (64 aa). Residue Lys-558 forms a Glycyl lysine isopeptide (Lys-Gly) (interchain with G-Cter in SUMO2) linkage.

In terms of assembly, interacts with OASL, ATF7IP, ATF7IP2 and BAHD1. Binds CHAF1A and the SUV39H1-CBX5 complex via the MBD domain. Binds MGP via the TRD domain. May be part of the MeCP1 complex. In terms of processing, sumoylated, sumoylation may increase interaction with ATF7IP. Widely expressed.

It localises to the nucleus. The protein localises to the nucleus matrix. It is found in the nucleus speckle. The protein resides in the chromosome. Transcriptional repressor that binds CpG islands in promoters where the DNA is methylated at position 5 of cytosine within CpG dinucleotides. Binding is abolished by the presence of 7-mG that is produced by DNA damage by methylmethanesulfonate (MMS). Acts as transcriptional repressor and plays a role in gene silencing by recruiting ATF7IP, which in turn recruits factors such as the histone methyltransferase SETDB1. Probably forms a complex with SETDB1 and ATF7IP that represses transcription and couples DNA methylation and histone 'Lys-9' trimethylation. Isoform 1 and isoform 2 can also repress transcription from unmethylated promoters. The polypeptide is Methyl-CpG-binding domain protein 1 (Homo sapiens (Human)).